The following is a 95-amino-acid chain: MSYTDPDDSLPEHVPGEAEMSAQKEAILKQILEPQARMRLSNIRMVKPETAAALESHLINAASQGRLAGKISDEHLKQILQSMQKPRREFKINRR.

Positions 1–21 (MSYTDPDDSLPEHVPGEAEMS) are disordered.

Belongs to the PDCD5 family.

The sequence is that of DNA-binding protein CENSYa_1764 from Cenarchaeum symbiosum (strain A).